The primary structure comprises 218 residues: Glutathione S-transferase (218 aa).

In terms of domain architecture, GST N-terminal spans 2-88 (PVTLGYWDIR…YIARKHDLCG (87 aa)). Glutathione contacts are provided by residues 7–8 (YW), 46–50 (WLNEK), 59–60 (NL), and 72–73 (QS). Positions 90–208 (TEEERIQLDI…KSSRFSCKQI (119 aa)) constitute a GST C-terminal domain. Tyr116 is a binding site for substrate.

Belongs to the GST superfamily. Mu family. As to quaternary structure, homodimer.

It localises to the cytoplasm. The catalysed reaction is RX + glutathione = an S-substituted glutathione + a halide anion + H(+). Its function is as follows. Conjugation of reduced glutathione to a wide number of exogenous and endogenous hydrophobic electrophiles. This Mesocricetus auratus (Golden hamster) protein is Glutathione S-transferase.